The sequence spans 102 residues: Phosphoribosyl-ATP pyrophosphatase (102 aa).

The protein belongs to the PRA-PH family.

It localises to the cytoplasm. The catalysed reaction is 1-(5-phospho-beta-D-ribosyl)-ATP + H2O = 1-(5-phospho-beta-D-ribosyl)-5'-AMP + diphosphate + H(+). The protein operates within amino-acid biosynthesis; L-histidine biosynthesis; L-histidine from 5-phospho-alpha-D-ribose 1-diphosphate: step 2/9. This is Phosphoribosyl-ATP pyrophosphatase from Ignicoccus hospitalis (strain KIN4/I / DSM 18386 / JCM 14125).